Here is a 223-residue protein sequence, read N- to C-terminus: Phage shock protein A homolog (223 aa).

Positions 29 to 185 form a coiled coil; it reads IDQALRDMRS…AGMEDRNKAM (157 aa).

It belongs to the PspA/Vipp/IM30 family.

This chain is Phage shock protein A homolog, found in Deinococcus radiodurans (strain ATCC 13939 / DSM 20539 / JCM 16871 / CCUG 27074 / LMG 4051 / NBRC 15346 / NCIMB 9279 / VKM B-1422 / R1).